A 200-amino-acid polypeptide reads, in one-letter code: Adenylate kinase (200 aa).

Position 10 to 15 (10 to 15 (GAGKGT)) interacts with ATP. An NMP region spans residues 30-59 (STGDMLRAAVAAETPVGLEAKAIMESGGLV). AMP-binding positions include threonine 31, arginine 36, 57-59 (GLV), 85-88 (GFPR), and glutamine 92. The LID stretch occupies residues 126–142 (KRAEETAARGQPVRKDD). Arginine 127 is an ATP binding site. Positions 139 and 150 each coordinate AMP. ATP is bound at residue lysine 178.

This sequence belongs to the adenylate kinase family. In terms of assembly, monomer.

It localises to the cytoplasm. It catalyses the reaction AMP + ATP = 2 ADP. The protein operates within purine metabolism; AMP biosynthesis via salvage pathway; AMP from ADP: step 1/1. Catalyzes the reversible transfer of the terminal phosphate group between ATP and AMP. Plays an important role in cellular energy homeostasis and in adenine nucleotide metabolism. The polypeptide is Adenylate kinase (Methylorubrum extorquens (strain CM4 / NCIMB 13688) (Methylobacterium extorquens)).